Here is a 339-residue protein sequence, read N- to C-terminus: Phenylalanine--tRNA ligase alpha subunit (339 aa).

Residue Glu247 coordinates Mg(2+).

This sequence belongs to the class-II aminoacyl-tRNA synthetase family. Phe-tRNA synthetase alpha subunit type 1 subfamily. As to quaternary structure, tetramer of two alpha and two beta subunits. Mg(2+) is required as a cofactor.

The protein resides in the cytoplasm. The catalysed reaction is tRNA(Phe) + L-phenylalanine + ATP = L-phenylalanyl-tRNA(Phe) + AMP + diphosphate + H(+). The sequence is that of Phenylalanine--tRNA ligase alpha subunit from Deinococcus geothermalis (strain DSM 11300 / CIP 105573 / AG-3a).